We begin with the raw amino-acid sequence, 248 residues long: MTIKNKVIIITGASSGIGEATAILLAEKGAKLVLAARRVEKLEKIVQTIKASSGEAIFAKTDVTKREDNKKLVELAIERYGKVDAIFLNAGIMPNSPLSALKEDEWEQMIDINIKGVLNGIAAVLPSFIAQKSGHIIATSSVAGLKAYPGGAVYGATKWAVRDLMEVLRMESAQEGTNIRTATIYPAAINTELLETITDKETEQGMTNLYKQYGVTPDRIASIVAYAIDQPEDINVNEFTVGPTTQPW.

9–33 provides a ligand contact to NADP(+); it reads IITGASSGIGEATAILLAEKGAKLV. Serine 141 provides a ligand contact to substrate. Tyrosine 154 acts as the Proton acceptor in catalysis.

It belongs to the short-chain dehydrogenases/reductases (SDR) family.

This is an uncharacterized protein from Listeria innocua serovar 6a (strain ATCC BAA-680 / CLIP 11262).